The primary structure comprises 397 residues: Myb family transcription factor PHL4 (397 aa).

The interval Met1–Asn27 is disordered. In terms of domain architecture, HTH myb-type spans Ala228 to Tyr288. The H-T-H motif DNA-binding region spans Pro259–Arg284. A coiled coil region spans residues Thr319 to Leu339. Positions Leu332 to Glu337 match the LHEQLE motif. A disordered region spans residues Lys359 to Glu397. Positions Glu386–Glu397 are enriched in basic and acidic residues. Residue Ser387 is modified to Phosphoserine.

The protein belongs to the MYB-CC family.

The protein resides in the nucleus. Its function is as follows. Transcription factor involved in male gametophyte development. The polypeptide is Myb family transcription factor PHL4 (Arabidopsis thaliana (Mouse-ear cress)).